A 188-amino-acid polypeptide reads, in one-letter code: uncharacterized protein (188 aa).

An N-terminal signal peptide occupies residues 1-23 (MVRPKLAFYILPLLLAFLGSALG). N74 is a glycosylation site (N-linked (GlcNAc...) asparagine).

This is an uncharacterized protein from Mus musculus (Mouse).